The primary structure comprises 192 residues: Leucine-rich repeat-containing protein 51 (192 aa).

3 LRR repeats span residues 49–71, 80–101, and 103–124; these read SLTQ…NQVA, NLAW…LTTF, and NLSV…NKLA. The LRRCT domain maps to 137-175; the sequence is NPMEEEKGYRQYVLCTLSRITTFDFAGVTKADRTTAEVW.

Its subcellular location is the cytoplasm. This is Leucine-rich repeat-containing protein 51 from Pan troglodytes (Chimpanzee).